The primary structure comprises 444 residues: P2X purinoceptor 5 (444 aa).

Residues 1 to 30 (MGQAGCKGLCLSLFDYKTEKYVIAKNKKVG) lie on the Cytoplasmic side of the membrane. Residues 31 to 51 (LLYRLLQASILAYLVVWVFLI) form a helical membrane-spanning segment. Over 52 to 319 (KKGYQDVDTS…RTLMKAYGIR (268 aa)) the chain is Extracellular. N-linked (GlcNAc...) asparagine glycosylation is present at N77. Intrachain disulfides connect C118–C169, C129–C152, and C135–C163. Residue N202 is glycosylated (N-linked (GlcNAc...) asparagine). 2 cysteine pairs are disulfide-bonded: C220–C229 and C263–C272. Residues 320–362 (FDVMVNGKAGKFSIIPTIINVGSGVALMGAGAFFCDLVLIYLI) traverse the membrane as a helical segment. Topologically, residues 363–444 (KKREFYRDKK…PQLLEPHRST (82 aa)) are cytoplasmic. The segment at 378–444 (GLEDSSQEAE…PQLLEPHRST (67 aa)) is disordered.

This sequence belongs to the P2X receptor family. As to quaternary structure, functional P2XRs are organized as homomeric and heteromeric trimers. Homotrimer. Forms heterotrimer with P2RX1. In terms of tissue distribution, expressed at high levels in brain and immune system.

The protein resides in the cell membrane. The enzyme catalyses Na(+)(in) = Na(+)(out). The catalysed reaction is Ca(2+)(in) = Ca(2+)(out). It carries out the reaction chloride(in) = chloride(out). Its activity is regulated as follows. Activated by ATP. Slowly desensitizing. Sensitive to the ATP agonist alpha/beta-methylene-ATP. Functionally, ATP-gated nonselective transmembrane cation channel permeable to potassium, sodium and calcium. Unlike other P2RX receptors, the P2X5 receptor is also permeable to chloride. May play a supporting role in the inflammatory response. Its function is as follows. Non-functional. The sequence is that of P2X purinoceptor 5 from Homo sapiens (Human).